The sequence spans 500 residues: Glycogen synthase (500 aa).

Lys-15 lines the ADP-alpha-D-glucose pocket.

Belongs to the glycosyltransferase 1 family. Bacterial/plant glycogen synthase subfamily.

It catalyses the reaction [(1-&gt;4)-alpha-D-glucosyl](n) + ADP-alpha-D-glucose = [(1-&gt;4)-alpha-D-glucosyl](n+1) + ADP + H(+). It participates in glycan biosynthesis; glycogen biosynthesis. Its function is as follows. Synthesizes alpha-1,4-glucan chains using ADP-glucose. This Protochlamydia amoebophila (strain UWE25) protein is Glycogen synthase.